Consider the following 360-residue polypeptide: BOLA class I histocompatibility antigen, alpha chain BL3-6 (360 aa).

An N-terminal signal peptide occupies residues 1–21 (MGPRALLLLLSGVLILTETRA). Residues 22–111 (GSHSLRYFST…LRGYYNQSEA (90 aa)) form an alpha-1 region. The Extracellular segment spans residues 22–308 (GSHSLRYFST…QPSFLTMGII (287 aa)). Residue asparagine 107 is glycosylated (N-linked (GlcNAc...) asparagine). The segment at 112–203 (GSHTLQWMSG…ENGKDTLLRA (92 aa)) is alpha-2. Intrachain disulfides connect cysteine 122-cysteine 185 and cysteine 224-cysteine 280. The alpha-3 stretch occupies residues 204–295 (DPPKAHVTHH…GLQEPLTLRW (92 aa)). Residues 206–292 (PKAHVTHHPI…QHEGLQEPLT (87 aa)) form the Ig-like C1-type domain. The connecting peptide stretch occupies residues 296-308 (EPPQPSFLTMGII). A helical transmembrane segment spans residues 309–328 (VGLVLLVVTGAVVAGVVICM). The Cytoplasmic segment spans residues 329-360 (KKRSGEKGGNYIQASSSDSAQGSDVSLTVPKV). The disordered stretch occupies residues 340 to 360 (IQASSSDSAQGSDVSLTVPKV). The span at 341 to 354 (QASSSDSAQGSDVS) shows a compositional bias: low complexity. Phosphoserine is present on residues serine 351 and serine 354.

It belongs to the MHC class I family. As to quaternary structure, heterodimer of an alpha chain and a beta chain (beta-2-microglobulin).

Its subcellular location is the membrane. Functionally, involved in the presentation of foreign antigens to the immune system. The polypeptide is BOLA class I histocompatibility antigen, alpha chain BL3-6 (Bos taurus (Bovine)).